We begin with the raw amino-acid sequence, 500 residues long: NAD(P)H-quinone oxidoreductase chain 4, chloroplastic (500 aa).

The next 14 helical transmembrane spans lie at 4-24 (FPWL…IFFL), 35-55 (YTIA…CYHF), 87-107 (LGSI…AWPV), 111-131 (SQLF…LFSS), 134-154 (LLLF…LLSM), 167-187 (FILY…GMGL), 211-231 (ILLY…IPLH), 242-262 (HYST…YGLI), 272-292 (AHYL…IYAA), 313-333 (MGFI…GAIL), 334-354 (QILS…TACD), 386-406 (LALP…GLIT), 417-437 (LITF…LSML), and 462-482 (LFLL…PDFV).

The protein belongs to the complex I subunit 4 family.

It is found in the plastid. It localises to the chloroplast thylakoid membrane. The catalysed reaction is a plastoquinone + NADH + (n+1) H(+)(in) = a plastoquinol + NAD(+) + n H(+)(out). It catalyses the reaction a plastoquinone + NADPH + (n+1) H(+)(in) = a plastoquinol + NADP(+) + n H(+)(out). The sequence is that of NAD(P)H-quinone oxidoreductase chain 4, chloroplastic from Saccharum officinarum (Sugarcane).